Here is a 129-residue protein sequence, read N- to C-terminus: Lysozyme C (129 aa).

The region spanning 1 to 129 (KVFSKCELAH…LSEYLASCNL (129 aa)) is the C-type lysozyme domain. 4 disulfide bridges follow: Cys6/Cys127, Cys30/Cys115, Cys65/Cys80, and Cys76/Cys94. Residues Glu35 and Asp53 contribute to the active site. The Ca(2+) site is built by Lys82, Asp85, Asn87, Asp90, and Asp91.

This sequence belongs to the glycosyl hydrolase 22 family. In terms of assembly, monomer. The cofactor is Ca(2+).

It carries out the reaction Hydrolysis of (1-&gt;4)-beta-linkages between N-acetylmuramic acid and N-acetyl-D-glucosamine residues in a peptidoglycan and between N-acetyl-D-glucosamine residues in chitodextrins.. Lysozymes have primarily a bacteriolytic function; those in tissues and body fluids are associated with the monocyte-macrophage system and enhance the activity of immunoagents. This Equus asinus (Donkey) protein is Lysozyme C (LYZ).